Reading from the N-terminus, the 136-residue chain is Glycine-rich RNA-binding protein 4, mitochondrial (136 aa).

Residues 1–33 (MAFCNKLSGILRQGVSQSSNGPVTSMLGSLRYM) constitute a mitochondrion transit peptide. The RRM domain maps to 35 to 113 (SKLFVGGLSW…RQIRVNLATE (79 aa)). Phosphoserine is present on S43. Residues 113-136 (ERSSAPRSSFGGGGGYGGGGGGGY) form a disordered region. A compositionally biased stretch (gly residues) spans 122–136 (FGGGGGYGGGGGGGY). Positions 123-135 (GGGGGYGGGGGGG) are glycine-rich (GR) required for cell-to-cell movement.

This sequence belongs to the GR-RBP family. Binds to small phloem-mobile single-stranded RNAs (ss-sRNA, e.g. small interfering RNA (siRNA) and microRNA (miRNA)) in the phloeme exudate, including viral-derived sRNA (vsiRNA). Abundantly expressed in young plants, root tips, and flowers, but weakly in mature leaves and stems, implying highly expression in actively proliferating organs.

Its subcellular location is the mitochondrion. It is found in the secreted. In terms of biological role, possibly has a role in RNA transcription or processing during stress. Binds sequence non-specifically to RNAs and DNAs. Mediates cell-to-cell trafficking of RNA interference (RNAi) signals (small RNAs (sRNA), e.g. small interfering RNA (siRNA) and microRNA (miRNA)) which regulate growth and development, as well as responses to environmental inputs, including pathogen attack; can compromise zucchini yellow mosaic virus (ZYMV) and tobacco rattle virus (TRV) infections at the early stage. The sequence is that of Glycine-rich RNA-binding protein 4, mitochondrial from Arabidopsis thaliana (Mouse-ear cress).